A 69-amino-acid chain; its full sequence is Small ribosomal subunit protein bS21 (69 aa).

Residues 49–69 form a disordered region; it reads IESAKRKAEKKKRLFSKKDKA.

Belongs to the bacterial ribosomal protein bS21 family.

In Leptospira borgpetersenii serovar Hardjo-bovis (strain JB197), this protein is Small ribosomal subunit protein bS21.